The following is a 1208-amino-acid chain: MLLCDSCNKGWHIYCLSPPLKHIPLGNWYCLECLNTDEETFGFVPGKCLLLEDFKRIADRAKRKWFGSGTVSRTQIEKKFWEIVEGSGGEVEVMYGNDLDTSVYGSGFPRIGDQRPESVEADIWDEYCGSPWNLNNMPKLKGSMLQAIRHNINGVTVPWLYLGMLFSSFCWHFEDHCFYSVNYLHWGEAKCWYGIPGSAASAFEKVMRKTLPDLFDAQPDLLFQLVTMLSPTVLQENKVPVYTVLQEPGNFVITFPKSFHAGFNFGLNCAEAVNFATADWLPYGGSGAELYRLYRKPSVISHEELLCVVAKGNCCNNEGSIHLKKELLRIYSKEKTWREQLWKSGILRSSPMFVPECADSVGIEEDPTCIICQQFLHLSAIVCNCRPSVFACLEHWKHLCECEPTKLRLEYRYTLAELDMMVQEVEKFGGCKTQETKISQRPSSGTKRSIALNKKEGMQVSQARPADKWLLRASKVLDAAFSSVEYATLLKESEQFLWAGSEMDRVRDVTKSLNKAKIWAEAVSDCLSKVEGEVNDDSMKVHLEFIDELLRVNPVPCFNSGYLKLKDYAEEARKLSEKIDSALSSSPTITQLELLHSEVSRSPISLKKHEILSKKISSAKMLAKRAKRYLTDAKPPGIEMDALFKLNSEMLELHVQLPETEGILDLVKKSESARDKSNKVLTGSLSLENVEELLHEFDSFSINVPELNILRQYHVDTLSWISRFNDVMVDVREGKDQRKLISDLSSLLRDGASLGIQVEGLPLVEVELKKASCREKARTVYTARKSLDFIEQLLSEAVILHIEEEEIFVEISGILSTARCWEERASTILENETQMYELKDLVRMSVNIDAVLPTLQGIENTISSAETWLQKSEPFLSATSSMASSPCSMLELPVLKDLVTQAKLLNVQLQEPRILETLLLNCERWQCDNHQLLQETEDLLDNAKIDDGTHSNILPKIMDLITRVDSARRSGLALGLNFDELPKLRTASLKLGWCCKTITLSSSSPTSELLEDVGKPSLQHIQQHLKEGQTLEILPEEYYLGKRLMELKDTGLEWAKRARKVVTDSGALALEDVFELISEGENLPVHAEQELQSLRARSMLHCICLKPYNSRSMVSCSQCGEWYHTYCLKLHWRPKAYVCSACCPLAETTPQIDPARATEPERPSLNQRRTRMVATDAAVNDLKWKTRKHIKRTTKRSPQVHILPWFFT.

The PHD-type 1; degenerate zinc finger occupies 1–36 (MLLCDSCNKGWHIYCLSPPLKHIPLGNWYCLECLNT). Zn(2+) is bound by residues C4, C7, C30, and C33. The 167-residue stretch at 126–292 (EYCGSPWNLN…YGGSGAELYR (167 aa)) folds into the JmjC domain. Fe cation contacts are provided by H172, E174, and H260. Positions 369, 372, 383, 385, 392, 395, 400, and 402 each coordinate Zn(2+). The C5HC2 zinc finger occupies 369–421 (CIICQQFLHLSAIVCNCRPSVFACLEHWKHLCECEPTKLRLEYRYTLAELDMM). The short motif at 613–620 (SKKISSAK) is the Nuclear localization signal element. The segment at 1099 to 1145 (MLHCICLKPYNSRSMVSCSQCGEWYHTYCLKLHWRPKAYVCSACCPL) adopts a PHD-type 2 zinc-finger fold. Zn(2+) is bound by residues C1102, C1104, C1116, C1119, H1124, C1127, C1139, and C1142.

This sequence belongs to the JARID1 histone demethylase family. It depends on Fe(2+) as a cofactor. As to expression, expressed in inflorescences, roots, seedlings and siliques, and, at low levels, in leaves and stems.

The protein resides in the nucleus. The enzyme catalyses N(6),N(6),N(6)-trimethyl-L-lysyl(4)-[histone H3] + 2-oxoglutarate + O2 = N(6),N(6)-dimethyl-L-lysyl(4)-[histone H3] + formaldehyde + succinate + CO2. The catalysed reaction is N(6),N(6)-dimethyl-L-lysyl(4)-[histone H3] + 2-oxoglutarate + O2 = N(6)-methyl-L-lysyl(4)-[histone H3] + formaldehyde + succinate + CO2. It carries out the reaction N(6)-methyl-L-lysyl(4)-[histone H3] + 2-oxoglutarate + O2 = L-lysyl(4)-[histone H3] + formaldehyde + succinate + CO2. It catalyses the reaction N(6),N(6),N(6)-trimethyl-L-lysyl(4)-[histone H3] + 3 2-oxoglutarate + 3 O2 = L-lysyl(4)-[histone H3] + 3 formaldehyde + 3 succinate + 3 CO2. Its function is as follows. Functions as a histone H3 'Lys-4' (H3K4me) demethylase involved in the regulation of gene expression. Active on H3K4me1, H3K4me2 and H3K4me3. Repressor of the abscisic acid (ABA) signaling pathway, especially during stomatal closure regulation. Negative regulator of responses to dehydration stress by binding directly to the chromatin of SRK2E/OST1 and demethylating H3K4me3 to regulates its expression. Together with JMJ14 and JMJ16, required for plant growth and development. In Arabidopsis thaliana (Mouse-ear cress), this protein is Lysine-specific demethylase JMJ17.